Here is a 239-residue protein sequence, read N- to C-terminus: 1-(5-phosphoribosyl)-5-[(5-phosphoribosylamino)methylideneamino] imidazole-4-carboxamide isomerase (239 aa).

Catalysis depends on Asp-8, which acts as the Proton acceptor. The active-site Proton donor is Asp-129.

The protein belongs to the HisA/HisF family.

Its subcellular location is the cytoplasm. It catalyses the reaction 1-(5-phospho-beta-D-ribosyl)-5-[(5-phospho-beta-D-ribosylamino)methylideneamino]imidazole-4-carboxamide = 5-[(5-phospho-1-deoxy-D-ribulos-1-ylimino)methylamino]-1-(5-phospho-beta-D-ribosyl)imidazole-4-carboxamide. Its pathway is amino-acid biosynthesis; L-histidine biosynthesis; L-histidine from 5-phospho-alpha-D-ribose 1-diphosphate: step 4/9. The chain is 1-(5-phosphoribosyl)-5-[(5-phosphoribosylamino)methylideneamino] imidazole-4-carboxamide isomerase from Bacillus thuringiensis (strain Al Hakam).